The following is a 264-amino-acid chain: S-adenosylmethionine decarboxylase proenzyme (264 aa).

Catalysis depends on Ser-112, which acts as the Schiff-base intermediate with substrate; via pyruvic acid. Ser-112 is modified (pyruvic acid (Ser); by autocatalysis). The active-site Proton acceptor; for processing activity is His-117. Cys-140 serves as the catalytic Proton donor; for catalytic activity.

This sequence belongs to the prokaryotic AdoMetDC family. Type 2 subfamily. Heterooctamer of four alpha and four beta chains arranged as a tetramer of alpha/beta heterodimers. Pyruvate serves as cofactor. Is synthesized initially as an inactive proenzyme. Formation of the active enzyme involves a self-maturation process in which the active site pyruvoyl group is generated from an internal serine residue via an autocatalytic post-translational modification. Two non-identical subunits are generated from the proenzyme in this reaction, and the pyruvate is formed at the N-terminus of the alpha chain, which is derived from the carboxyl end of the proenzyme. The post-translation cleavage follows an unusual pathway, termed non-hydrolytic serinolysis, in which the side chain hydroxyl group of the serine supplies its oxygen atom to form the C-terminus of the beta chain, while the remainder of the serine residue undergoes an oxidative deamination to produce ammonia and the pyruvoyl group blocking the N-terminus of the alpha chain.

It carries out the reaction S-adenosyl-L-methionine + H(+) = S-adenosyl 3-(methylsulfanyl)propylamine + CO2. It functions in the pathway amine and polyamine biosynthesis; S-adenosylmethioninamine biosynthesis; S-adenosylmethioninamine from S-adenosyl-L-methionine: step 1/1. Its function is as follows. Catalyzes the decarboxylation of S-adenosylmethionine to S-adenosylmethioninamine (dcAdoMet), the propylamine donor required for the synthesis of the polyamines spermine and spermidine from the diamine putrescine. This chain is S-adenosylmethionine decarboxylase proenzyme, found in Sodalis glossinidius (strain morsitans).